We begin with the raw amino-acid sequence, 830 residues long: Lon protease 3 (830 aa).

One can recognise a Lon N-terminal domain in the interval 19-213 (VPLLPLRDII…RLIELMQAEI (195 aa)). 367–374 (GPPGVGKT) contacts ATP. Positions 604–784 (RDEVGLVNGL…DDVLREALIL (181 aa)) constitute a Lon proteolytic domain. Active-site residues include S690 and K733. The segment covering 811-823 (PVKAPPAAAGEPT) has biased composition (low complexity). The disordered stretch occupies residues 811 to 830 (PVKAPPAAAGEPTPAAPPGA).

The protein belongs to the peptidase S16 family. As to quaternary structure, homohexamer. Organized in a ring with a central cavity.

Its subcellular location is the cytoplasm. It catalyses the reaction Hydrolysis of proteins in presence of ATP.. In terms of biological role, ATP-dependent serine protease that mediates the selective degradation of mutant and abnormal proteins as well as certain short-lived regulatory proteins. Required for cellular homeostasis and for survival from DNA damage and developmental changes induced by stress. Degrades polypeptides processively to yield small peptide fragments that are 5 to 10 amino acids long. Binds to DNA in a double-stranded, site-specific manner. The chain is Lon protease 3 from Sorangium cellulosum (strain So ce56) (Polyangium cellulosum (strain So ce56)).